A 553-amino-acid polypeptide reads, in one-letter code: Protein YloV (553 aa).

The 193-residue stretch at 9 to 201 (RTFAEMILAG…LLCVYEGFLA (193 aa)) folds into the DhaL domain.

This is Protein YloV (yloV) from Bacillus subtilis (strain 168).